Reading from the N-terminus, the 122-residue chain is Large ribosomal subunit protein uL29 (122 aa).

Position 12 is a phosphoserine (Ser-12).

The protein belongs to the universal ribosomal protein uL29 family. In terms of assembly, component of the large ribosomal subunit (LSU). Mature yeast ribosomes consist of a small (40S) and a large (60S) subunit. The 40S small subunit contains 1 molecule of ribosomal RNA (18S rRNA) and at least 33 different proteins. The large 60S subunit contains 3 rRNA molecules (25S, 5.8S and 5S rRNA) and at least 46 different proteins. uL29 is associated with the polypeptide exit tunnel.

The protein localises to the cytoplasm. It is found in the nucleus. The protein resides in the nucleolus. Its function is as follows. Component of the ribosome, a large ribonucleoprotein complex responsible for the synthesis of proteins in the cell. The small ribosomal subunit (SSU) binds messenger RNAs (mRNAs) and translates the encoded message by selecting cognate aminoacyl-transfer RNA (tRNA) molecules. The large subunit (LSU) contains the ribosomal catalytic site termed the peptidyl transferase center (PTC), which catalyzes the formation of peptide bonds, thereby polymerizing the amino acids delivered by tRNAs into a polypeptide chain. The nascent polypeptides leave the ribosome through a tunnel in the LSU and interact with protein factors that function in enzymatic processing, targeting, and the membrane insertion of nascent chains at the exit of the ribosomal tunnel. This Schizosaccharomyces pombe (strain 972 / ATCC 24843) (Fission yeast) protein is Large ribosomal subunit protein uL29 (rpl35).